Here is a 228-residue protein sequence, read N- to C-terminus: R-spondin-4 (228 aa).

The signal sequence occupies residues Met1–Ala19. Residue Asn34 is glycosylated (N-linked (GlcNAc...) asparagine). Disulfide bonds link Cys35–Cys41, Cys38–Cys47, Cys50–Cys69, Cys73–Cys88, Cys91–Cys98, Cys95–Cys104, Cys107–Cys118, Cys122–Cys135, Cys139–Cys181, Cys150–Cys157, and Cys190–Cys196. An FU repeat occupies Ala85 to Thr128. Residues Glu138–Pro197 form the TSP type-1 domain. Residues Lys193–Gln228 form a disordered region. Over residues Arg203–Gln228 the composition is skewed to basic residues.

Belongs to the R-spondin family. Binds heparin. Interacts with LGR4, LGR5 and LGR6.

Its subcellular location is the secreted. Its function is as follows. Activator of the canonical Wnt signaling pathway by acting as a ligand for LGR4-6 receptors. Upon binding to LGR4-6 (LGR4, LGR5 or LGR6), LGR4-6 associate with phosphorylated LRP6 and frizzled receptors that are activated by extracellular Wnt receptors, triggering the canonical Wnt signaling pathway to increase expression of target genes. Also regulates the canonical Wnt/beta-catenin-dependent pathway and non-canonical Wnt signaling by acting as an inhibitor of ZNRF3, an important regulator of the Wnt signaling pathway. The polypeptide is R-spondin-4 (Rspo4) (Mus musculus (Mouse)).